The sequence spans 247 residues: Probable chemoreceptor glutamine deamidase CheD (247 aa).

The disordered stretch occupies residues 204–247 (KRPAAPQPARPRIELFGGRGTTPGAGSQAAGSPYAANLSRKQEA).

It belongs to the CheD family.

The catalysed reaction is L-glutaminyl-[protein] + H2O = L-glutamyl-[protein] + NH4(+). In terms of biological role, probably deamidates glutamine residues to glutamate on methyl-accepting chemotaxis receptors (MCPs), playing an important role in chemotaxis. This is Probable chemoreceptor glutamine deamidase CheD from Burkholderia orbicola (strain MC0-3).